The primary structure comprises 335 residues: MSDSVKTTVDPLLKDLDGKKESFRRNVVSMAAELKQVRGRLVSQEQFFVKESFCRKEAEKKAKNMEMEICKLQKKLEDRNCELVASTSAAEKFLEEVDDLRSQLALTKDIAETSAASAQSAQLQCSVLTEQLDDKTRSLREHEDRVTHLGHQLDNLQRDLKTRECSQKQLREEVMRIEREITEAVAKSGKGTECELRKLLEEVSPKNFERMNMLLAVKDEEIAKLKDDVKLMSAHWKLKTKELESQLERQRRADQELKKKVLKLEFCLQEARSQTRKLQRAGERRDKAIKELSDQITGKQLNESVSGEKQNFWDTSGFKIVVSMSMLILVIISKR.

Coiled coils occupy residues 55-85 (RKEA…ELVA) and 125-260 (CSVL…LKKK). A Bipartite nuclear localization signal motif is present at residues 239–260 (KTKELESQLERQRRADQELKKK). The chain crosses the membrane as a helical span at residues 312–329 (FWDTSGFKIVVSMSMLIL).

Forms homomers and heteromers with NEAP1 and NEAP3. Interacts with SUN1 and SUN2.

The protein localises to the nucleus inner membrane. It localises to the nucleus. Its subcellular location is the nucleoplasm. This is Nuclear envelope-associated protein 2 from Arabidopsis thaliana (Mouse-ear cress).